The chain runs to 430 residues: Solanesyl-diphosphate synthase 1, mitochondrial (430 aa).

Residues 1–31 constitute a mitochondrion transit peptide; the sequence is MSWRWALARRVAALGATSGGGDGATAQAQRL. Isopentenyl diphosphate contacts are provided by K133, R136, and H182. Mg(2+)-binding residues include D189 and D193. An an all-trans-polyprenyl diphosphate-binding site is contributed by R198. R199 contributes to the isopentenyl diphosphate binding site. An all-trans-polyprenyl diphosphate-binding residues include K275, T276, Q313, and K330.

Belongs to the FPP/GGPP synthase family. In terms of assembly, homodimer. Requires Mg(2+) as cofactor. Expressed in leaves, stems and roots. Highest expression in roots.

The protein resides in the mitochondrion. The catalysed reaction is 7 isopentenyl diphosphate + (2E)-geranyl diphosphate = all-trans-nonaprenyl diphosphate + 7 diphosphate. Its pathway is cofactor biosynthesis; ubiquinone biosynthesis. Its function is as follows. Involved in the supply of solanesyl diphosphate for ubiquinone-9 (UQ-9) biosynthesis in mitochondria. Farnesyl diphosphate is the preferred substrate. In Oryza sativa subsp. japonica (Rice), this protein is Solanesyl-diphosphate synthase 1, mitochondrial.